Here is a 144-residue protein sequence, read N- to C-terminus: MGHSVLLINGPNLNLLGTREPHIYGHTTLKDLEESCKEHAQSLGAELQSFQSNAEGTIIDRIHEARGKIDVIIINPAGYTHTSVAIRDALAGVDIPFIELHISNTHTREKFRHHSYLSDKAAAVIMGFGVDGYKYAVDYAVRNL.

The active-site Proton acceptor is Y24. Substrate is bound by residues N75, H81, and D88. Residue H101 is the Proton donor of the active site. Residues 102-103 (IS) and R112 contribute to the substrate site.

The protein belongs to the type-II 3-dehydroquinase family. In terms of assembly, homododecamer. Adopts a ring-like structure, composed of an arrangement of two hexameric rings stacked on top of one another.

The enzyme catalyses 3-dehydroquinate = 3-dehydroshikimate + H2O. The protein operates within aromatic compound metabolism; 3,4-dihydroxybenzoate biosynthesis; 3,4-dihydroxybenzoate from 3-dehydroquinate: step 1/2. In terms of biological role, is involved in the catabolism of quinate. Allows the utilization of quinate as carbon source via the beta-ketoadipate pathway. The sequence is that of Catabolic 3-dehydroquinase 1 from Fusarium vanettenii (strain ATCC MYA-4622 / CBS 123669 / FGSC 9596 / NRRL 45880 / 77-13-4) (Fusarium solani subsp. pisi).